Here is a 486-residue protein sequence, read N- to C-terminus: NADH-quinone oxidoreductase subunit N 1 (486 aa).

The next 14 helical transmembrane spans lie at 15-35, 46-66, 72-92, 111-128, 131-151, 166-186, 208-228, 241-261, 276-296, 303-323, 331-351, 375-395, 410-432, and 455-475; these read FLPEIILTVMGTLLMVLDPVI, ISLIALVMALGASIYAYGIAG, MLMVDGFATFFRVVVITVGIL, YHALLLFSIAGQCLMAAS, LIMVFIGLEISSIASYVLAGY, FLLGSFATGFFLYGVAWIYGL, FVGIAAALMFVGLAFKVSAAP, PTPVSAFLSAGPKAAAFAIFL, QPLVWTAALASMCIGNFAAIL, MLAYSSIAHAGYVLVALTAHS, MFYLAGYAFMNVGAFAAVSVL, AAMFTIFLLSLLGVPLTGGFF, IWLTVLGLLNSAVGAYYYLRILV, and FALILPALGTLALGIFPGWVL.

This sequence belongs to the complex I subunit 2 family. NDH-1 is composed of 14 different subunits. Subunits NuoA, H, J, K, L, M, N constitute the membrane sector of the complex.

The protein localises to the cell inner membrane. It catalyses the reaction a quinone + NADH + 5 H(+)(in) = a quinol + NAD(+) + 4 H(+)(out). Its function is as follows. NDH-1 shuttles electrons from NADH, via FMN and iron-sulfur (Fe-S) centers, to quinones in the respiratory chain. The immediate electron acceptor for the enzyme in this species is believed to be ubiquinone. Couples the redox reaction to proton translocation (for every two electrons transferred, four hydrogen ions are translocated across the cytoplasmic membrane), and thus conserves the redox energy in a proton gradient. This Solibacter usitatus (strain Ellin6076) protein is NADH-quinone oxidoreductase subunit N 1.